We begin with the raw amino-acid sequence, 332 residues long: DNA-directed RNA polymerase 2A (332 aa).

Residues Asp33, Lys108, and Asp265 contribute to the active site.

It belongs to the phage and mitochondrial RNA polymerase family.

The catalysed reaction is RNA(n) + a ribonucleoside 5'-triphosphate = RNA(n+1) + diphosphate. DNA-dependent RNA polymerase catalyzes the transcription of DNA into RNA using the four ribonucleoside triphosphates as substrates. In Nicotiana tabacum (Common tobacco), this protein is DNA-directed RNA polymerase 2A (RPOT2-SYL).